The following is a 799-amino-acid chain: Ribosome biogenesis protein BOP1 homolog (799 aa).

The segment at 1 to 171 is disordered; that stretch reads MPRRVRAQKR…DDTSDEEHSL (171 aa). Acidic residues predominate over residues 58–69; sequence SESDVTDDEQID. Over residues 70-81 the composition is skewed to basic and acidic residues; it reads EEARQADRDLLK. Residues 93-121 show a composition bias toward acidic residues; the sequence is DPSDADNDDDDDEEEAASDDDDEEEDAEP. The segment covering 122–132 has biased composition (low complexity); the sequence is SSDSSNEASDA. WD repeat units lie at residues 457-498, 500-538, 584-626, 629-669, 670-709, 713-752, and 769-799; these read GHKA…RVVT, DAEV…AAID, PHHA…TQHP, KRNR…KKLL, TGVR…KPYK, YHKY…DLGQ, and SDGM…KLHV.

The protein belongs to the WD repeat BOP1/ERB1 family.

It localises to the nucleus. Its subcellular location is the nucleolus. The protein resides in the nucleoplasm. Functionally, required for maturation of ribosomal RNAs and formation of the large ribosomal subunit. This Monosiga brevicollis (Choanoflagellate) protein is Ribosome biogenesis protein BOP1 homolog.